The primary structure comprises 150 residues: Detocs response regulatory protein DtcB (150 aa).

Positions 2–150 (KILIADDNIQ…TDLIKKITEL (149 aa)) constitute a Response regulatory domain. Asp54 is subject to 4-aspartylphosphate.

In terms of processing, probably phosphorylated by DtcA.

In terms of biological role, possible phosphate scavenger member of the two-component regulatory system Detocs that confers resistance to bacteriophage. When the system (DtcA-DtcB-DtcC) is expressed in a susceptible E.coli (strain MG1655) it confers resistance to bacteriophages T2, T4, T5, T7, SECphi4, SECphi6 and SECphi27; the level of resistance varies, resistance to T2, T7 and SECphi4 is not very high. DtcA probably autophosphorylates upon sensing viral infection, and subsequently transfers the phosphate signal to DtcC which activates it, leading to an antiviral defense; DtcB (this subunit) may scavenge phosphorylation signals from accidental activation of DtcA. In Enterobacter cloacae (strain JD6301), this protein is Detocs response regulatory protein DtcB.